The sequence spans 499 residues: uncharacterized protein (499 aa).

Residues 6-35 and 272-282 each bind FAD; these read EAVI…VIER and YRDGRIFLAGD.

Belongs to the PheA/TfdB FAD monooxygenase family. FAD is required as a cofactor.

This is an uncharacterized protein from Bacillus subtilis (strain 168).